The sequence spans 422 residues: SPbeta prophage-derived glycosyltransferase SunS (422 aa).

This sequence belongs to the glycosyltransferase 2 family.

In terms of biological role, transfers a hexose moiety onto 'Cys-41' of bacteriocin sublancin-168 (SunA). Accepts UDP-glucose (UDP-Glc), UDP-N-acetylglucosamine (UDP-GlcNAc), UDP-galactose (UDP-Gal), UDP-xylose (UDP-Xyl) and GDP-mannose as substrate. The chain is SPbeta prophage-derived glycosyltransferase SunS (sunS) from Bacillus subtilis (strain 168).